A 421-amino-acid polypeptide reads, in one-letter code: UDP-N-acetylglucosamine 1-carboxyvinyltransferase (421 aa).

22 to 23 (KN) is a phosphoenolpyruvate binding site. R93 serves as a coordination point for UDP-N-acetyl-alpha-D-glucosamine. The Proton donor role is filled by C117. C117 bears the 2-(S-cysteinyl)pyruvic acid O-phosphothioketal mark. UDP-N-acetyl-alpha-D-glucosamine-binding positions include 122–126 (RPVDL), D308, and L330.

It belongs to the EPSP synthase family. MurA subfamily.

It localises to the cytoplasm. The enzyme catalyses phosphoenolpyruvate + UDP-N-acetyl-alpha-D-glucosamine = UDP-N-acetyl-3-O-(1-carboxyvinyl)-alpha-D-glucosamine + phosphate. The protein operates within cell wall biogenesis; peptidoglycan biosynthesis. Its function is as follows. Cell wall formation. Adds enolpyruvyl to UDP-N-acetylglucosamine. In Wolinella succinogenes (strain ATCC 29543 / DSM 1740 / CCUG 13145 / JCM 31913 / LMG 7466 / NCTC 11488 / FDC 602W) (Vibrio succinogenes), this protein is UDP-N-acetylglucosamine 1-carboxyvinyltransferase.